Consider the following 74-residue polypeptide: Putative sulfur carrier protein NMA0882 (74 aa).

C13 (cysteine persulfide intermediate) is an active-site residue.

Belongs to the sulfur carrier protein TusA family.

The polypeptide is Putative sulfur carrier protein NMA0882 (Neisseria meningitidis serogroup A / serotype 4A (strain DSM 15465 / Z2491)).